The chain runs to 155 residues: Small ribosomal subunit protein uS7 (155 aa).

This sequence belongs to the universal ribosomal protein uS7 family. Part of the 30S ribosomal subunit. Contacts proteins S9 and S11.

One of the primary rRNA binding proteins, it binds directly to 16S rRNA where it nucleates assembly of the head domain of the 30S subunit. Is located at the subunit interface close to the decoding center, probably blocks exit of the E-site tRNA. This is Small ribosomal subunit protein uS7 from Chlorobium limicola (strain DSM 245 / NBRC 103803 / 6330).